Here is a 387-residue protein sequence, read N- to C-terminus: Phosphoglycerate kinase (387 aa).

Substrate contacts are provided by residues 21-23 (DLN), Arg36, 59-62 (HLGR), Arg113, and Arg146. Residues Lys197, Glu314, and 340 to 343 (GGDT) each bind ATP.

This sequence belongs to the phosphoglycerate kinase family. As to quaternary structure, monomer.

The protein resides in the cytoplasm. The catalysed reaction is (2R)-3-phosphoglycerate + ATP = (2R)-3-phospho-glyceroyl phosphate + ADP. The protein operates within carbohydrate degradation; glycolysis; pyruvate from D-glyceraldehyde 3-phosphate: step 2/5. The protein is Phosphoglycerate kinase of Pseudomonas paraeruginosa (strain DSM 24068 / PA7) (Pseudomonas aeruginosa (strain PA7)).